Reading from the N-terminus, the 652-residue chain is Iron-regulated outer membrane virulence protein (652 aa).

Residues 1-25 (MSRFNPSPVSLSVTLGLMFSASAFA) form the signal peptide. Residues 33–40 (ETMVVTAA) carry the TonB box motif. The 118-residue stretch at 45 to 162 (VIQNAPASIS…IGGVINIITR (118 aa)) folds into the TBDR plug domain. Residues 167 to 652 (QWSGNVQLST…RYWLGLDIAF (486 aa)) form the TBDR beta-barrel domain. The TonB C-terminal box signature appears at 635–652 (YGYVEDGRRYWLGLDIAF).

This sequence belongs to the TonB-dependent receptor family.

It localises to the cell outer membrane. In terms of biological role, involved in the initial step of iron uptake by binding ferric vibriobactin, an iron chelatin siderophore that allows V.cholerae to extract iron from the environment. The chain is Iron-regulated outer membrane virulence protein (irgA) from Vibrio cholerae serotype O1 (strain ATCC 39315 / El Tor Inaba N16961).